The primary structure comprises 828 residues: Periplasmic nitrate reductase (828 aa).

Residues 1–31 (MKLSRRSFMKANAVAAAAAAAGLSVPGVARA) constitute a signal peptide (tat-type signal). The region spanning 39–95 (IKWDKAPCRFCGTGCGVLVGTQQGRVVACQGDPDAPVNRGLNCIKGYFLPKIMYGKD) is the 4Fe-4S Mo/W bis-MGD-type domain. Positions 46, 49, 53, and 81 each coordinate [4Fe-4S] cluster. Mo-bis(molybdopterin guanine dinucleotide) is bound by residues Lys-83, Gln-150, Asn-175, Cys-179, 212 to 219 (WGANMAEM), 243 to 247 (STYQH), 262 to 264 (QSD), Met-372, Gln-376, Asn-482, 508 to 509 (SD), Lys-531, Asp-558, and 718 to 727 (TGRVLEHWHT). Residue Phe-794 participates in substrate binding. Residues Asn-802 and Lys-819 each contribute to the Mo-bis(molybdopterin guanine dinucleotide) site.

Belongs to the prokaryotic molybdopterin-containing oxidoreductase family. NasA/NapA/NarB subfamily. In terms of assembly, component of the periplasmic nitrate reductase NapAB complex composed of NapA and NapB. [4Fe-4S] cluster is required as a cofactor. It depends on Mo-bis(molybdopterin guanine dinucleotide) as a cofactor. Post-translationally, predicted to be exported by the Tat system. The position of the signal peptide cleavage has not been experimentally proven.

Its subcellular location is the periplasm. The enzyme catalyses 2 Fe(II)-[cytochrome] + nitrate + 2 H(+) = 2 Fe(III)-[cytochrome] + nitrite + H2O. Functionally, catalytic subunit of the periplasmic nitrate reductase complex NapAB. Receives electrons from NapB and catalyzes the reduction of nitrate to nitrite. This is Periplasmic nitrate reductase from Escherichia coli O157:H7 (strain EC4115 / EHEC).